The primary structure comprises 324 residues: Thiazole synthase (324 aa).

Lys-167 serves as the catalytic Schiff-base intermediate with DXP. 1-deoxy-D-xylulose 5-phosphate-binding positions include Gly-228, 254–255, and 276–277; these read AG and NT.

Belongs to the ThiG family. In terms of assembly, homotetramer. Forms heterodimers with either ThiH or ThiS.

Its subcellular location is the cytoplasm. It catalyses the reaction [ThiS sulfur-carrier protein]-C-terminal-Gly-aminoethanethioate + 2-iminoacetate + 1-deoxy-D-xylulose 5-phosphate = [ThiS sulfur-carrier protein]-C-terminal Gly-Gly + 2-[(2R,5Z)-2-carboxy-4-methylthiazol-5(2H)-ylidene]ethyl phosphate + 2 H2O + H(+). The protein operates within cofactor biosynthesis; thiamine diphosphate biosynthesis. Catalyzes the rearrangement of 1-deoxy-D-xylulose 5-phosphate (DXP) to produce the thiazole phosphate moiety of thiamine. Sulfur is provided by the thiocarboxylate moiety of the carrier protein ThiS. In vitro, sulfur can be provided by H(2)S. This chain is Thiazole synthase, found in Paramagnetospirillum magneticum (strain ATCC 700264 / AMB-1) (Magnetospirillum magneticum).